The following is a 344-amino-acid chain: Nuclear distribution protein nudE homolog 1 (344 aa).

The segment at 1 to 93 is self-association; sequence MEDSGKTFES…MQHSEGYRQI (93 aa). Residues 18 to 188 adopt a coiled-coil conformation; sequence WRDLAMTYKQ…ELAVQQKQDK (171 aa). The tract at residues 88-156 is interaction with PAFAH1B1; sequence EGYRQISALE…ERNAFLESEL (69 aa). An interaction with CENPF region spans residues 167-290; that stretch reads QRLKDEARDL…QSPSRTSGPA (124 aa). Residues 181 to 246 form a disordered region; sequence AVQQKQDKPR…DSSTSGTPLT (66 aa). Residue Ser211 is modified to Phosphoserine. 2 positions are modified to phosphothreonine: Thr215 and Thr228. Phosphoserine is present on Ser239. Phosphothreonine occurs at positions 243 and 246. Cys274 carries the S-palmitoyl cysteine; by ZDHHC2, ZDHHC3 and ZDHHC7 lipid modification. Positions 279–289 are enriched in polar residues; the sequence is YDQSPSRTSGP. A disordered region spans residues 279–337; sequence YDQSPSRTSGPASGRGTKNRDGVDRRPGSTSVGDKGSGKRLEFGKPASEPASPALPSAQ. The residue at position 282 (Ser282) is a Phosphoserine. A compositionally biased stretch (basic and acidic residues) spans 296 to 305; sequence KNRDGVDRRP. At Ser309 the chain carries Phosphoserine. Over residues 324–336 the composition is skewed to low complexity; it reads PASEPASPALPSA.

The protein belongs to the nudE family. Homodimer. Interacts with dynactin and PCM1. Interacts with CENPF, LIS1, CNTRL, dynein, tubulin gamma, PAFAH1B1, PCNT, SLMAP and TCP1. Interacts with ZNF365. Interacts with RAB9A; the interaction leads to RAB9A-dynein motor tethering. Interacts (via C-terminus) with MCRS1 (via C-terminus); phosphorylation of NDE1 inhibits the interaction. In terms of processing, phosphorylated in mitosis. Phosphorylation at Thr-246 is essential for the G2/M transition. In terms of tissue distribution, highly expressed in ovary. Also expressed in brain, heart, kidney, large intestine, liver, lung, small intestine and testis.

The protein localises to the cytoplasm. Its subcellular location is the cytoskeleton. It is found in the microtubule organizing center. The protein resides in the centrosome. It localises to the spindle. The protein localises to the chromosome. Its subcellular location is the centromere. It is found in the kinetochore. The protein resides in the cleavage furrow. It localises to the cytoplasmic vesicle membrane. Required for centrosome duplication and formation and function of the mitotic spindle. Essential for the development of the cerebral cortex. May regulate the production of neurons by controlling the orientation of the mitotic spindle during division of cortical neuronal progenitors of the proliferative ventricular zone of the brain. Orientation of the division plane perpendicular to the layers of the cortex gives rise to two proliferative neuronal progenitors whereas parallel orientation of the division plane yields one proliferative neuronal progenitor and a postmitotic neuron. A premature shift towards a neuronal fate within the progenitor population may result in an overall reduction in the final number of neurons and an increase in the number of neurons in the deeper layers of the cortex. Acts as a RAB9A/B effector that tethers RAB9-associated late endosomes to the dynein motor for their retrograde transport to the trans-Golgi network. The sequence is that of Nuclear distribution protein nudE homolog 1 from Mus musculus (Mouse).